A 699-amino-acid chain; its full sequence is Elongation factor G (699 aa).

The tr-type G domain maps to 8–288 (EDYRNFGIMA…AVVDYLPSPM (281 aa)). GTP is bound by residues 17 to 24 (AHIDAGKT), 86 to 90 (DTPGH), and 140 to 143 (NKMD).

It belongs to the TRAFAC class translation factor GTPase superfamily. Classic translation factor GTPase family. EF-G/EF-2 subfamily.

It localises to the cytoplasm. Its function is as follows. Catalyzes the GTP-dependent ribosomal translocation step during translation elongation. During this step, the ribosome changes from the pre-translocational (PRE) to the post-translocational (POST) state as the newly formed A-site-bound peptidyl-tRNA and P-site-bound deacylated tRNA move to the P and E sites, respectively. Catalyzes the coordinated movement of the two tRNA molecules, the mRNA and conformational changes in the ribosome. The polypeptide is Elongation factor G (Rhizobium leguminosarum bv. trifolii (strain WSM2304)).